Reading from the N-terminus, the 325-residue chain is Tetraacyldisaccharide 4'-kinase (325 aa).

55 to 62 contacts ATP; that stretch reads TAGGNGKT.

The protein belongs to the LpxK family.

It carries out the reaction a lipid A disaccharide + ATP = a lipid IVA + ADP + H(+). It functions in the pathway glycolipid biosynthesis; lipid IV(A) biosynthesis; lipid IV(A) from (3R)-3-hydroxytetradecanoyl-[acyl-carrier-protein] and UDP-N-acetyl-alpha-D-glucosamine: step 6/6. In terms of biological role, transfers the gamma-phosphate of ATP to the 4'-position of a tetraacyldisaccharide 1-phosphate intermediate (termed DS-1-P) to form tetraacyldisaccharide 1,4'-bis-phosphate (lipid IVA). The protein is Tetraacyldisaccharide 4'-kinase of Salmonella dublin (strain CT_02021853).